We begin with the raw amino-acid sequence, 508 residues long: MGSIDNLMAQKLTSQFPMNTLEPEEFRRQGHLMIDFLADYYRKVENYPVRSQVSPGYLREILPESAPYNPESLETILQDVQTKIIPGITHWQSPNFFAYFPSSGSTAGFLGEMLSTGFNVVGFNWMVSPAATELENVVTDWFGKMLQLPKSFLFSGGGGGVLQGTTCEAILCTLVAARDKNLRQHGMDNIGKLVVYCSDQTHSALQKAAKIAGIDPKNFRAIETTKSSNFKLCPKRLESAILYDLQNGLIPLYLCATVGTTSSTTVDPLPALTEVAKKYDLWVHVDAAYAGSACICPEFRQYLDGVENADSFSLNAHKWFLTTLDCCCLWVRDPSALIKSLSTYPEFLKNNASETNKVVDYKDWQIMLSRRFRALKLWFVLRSYGVGQLREFIRGHVGMAKYFEGLVGLDKRFEVVAPRLFSMVCFRIKPSAMIGKNDEDEVNEINRKLLESVNDSGRIYVSHTVLGGIYVIRFAIGGTLTDINHVSAAWKVLQDHADALLDEAFTAN.

Residue Lys-318 is modified to N6-(pyridoxal phosphate)lysine.

The protein belongs to the group II decarboxylase family. As to quaternary structure, homodimer. It depends on pyridoxal 5'-phosphate as a cofactor.

It catalyses the reaction L-tyrosine + H(+) = tyramine + CO2. The sequence is that of Tyrosine decarboxylase 4 (TYRDC-4) from Petroselinum crispum (Parsley).